A 187-amino-acid polypeptide reads, in one-letter code: ATP-dependent protease subunit HslV (187 aa).

The active site involves Thr13. Residues Ala172, Cys175, and Thr178 each contribute to the Na(+) site.

The protein belongs to the peptidase T1B family. HslV subfamily. In terms of assembly, a double ring-shaped homohexamer of HslV is capped on each side by a ring-shaped HslU homohexamer. The assembly of the HslU/HslV complex is dependent on binding of ATP.

It localises to the cytoplasm. It carries out the reaction ATP-dependent cleavage of peptide bonds with broad specificity.. With respect to regulation, allosterically activated by HslU binding. Protease subunit of a proteasome-like degradation complex believed to be a general protein degrading machinery. This Caulobacter sp. (strain K31) protein is ATP-dependent protease subunit HslV.